We begin with the raw amino-acid sequence, 127 residues long: Small ribosomal subunit protein bS6 (127 aa).

The interval 104-127 (QGAEKGKSSRKEKVAAEAEASEEA) is disordered. The span at 107–119 (EKGKSSRKEKVAA) shows a compositional bias: basic and acidic residues.

It belongs to the bacterial ribosomal protein bS6 family.

Functionally, binds together with bS18 to 16S ribosomal RNA. The sequence is that of Small ribosomal subunit protein bS6 from Coxiella burnetii (strain CbuG_Q212) (Coxiella burnetii (strain Q212)).